A 372-amino-acid polypeptide reads, in one-letter code: Lysophosphatidic acid receptor 5 (372 aa).

Residues 1–30 (MFANSSANTTSTNSSVLQCPDYRDTHRLHM) are Extracellular-facing. N-linked (GlcNAc...) asparagine glycosylation is found at Asn-4, Asn-8, and Asn-13. Residues 31–51 (VVYSLVLATGLPLNALALWVF) form a helical membrane-spanning segment. At 52–59 (LRVLRVHS) the chain is on the cytoplasmic side. A helical membrane pass occupies residues 60–80 (VVSVYMCNLAASDLLFTLSLP). Residues 81–100 (LRLSYYAQHHWPFPGFLCQT) lie on the Extracellular side of the membrane. A disulfide bridge connects residues Cys-98 and Cys-179. A helical transmembrane segment spans residues 101-121 (SGAIFQMNMYGSCLFLMLINV). Residues 122–140 (DRYAAIVHPLRLRHLRRPR) lie on the Cytoplasmic side of the membrane. A helical transmembrane segment spans residues 141 to 161 (VARRLCLGVWALILLFAVPAA). Over 162-191 (RVHSPSHCTYKNITVRLCFESFSDELWKGR) the chain is Extracellular. Asn-173 carries N-linked (GlcNAc...) asparagine glycosylation. A helical transmembrane segment spans residues 192-212 (LLPLLLLAEILGFLLPLAAVV). At 213 to 243 (YSSGRVFWTLARPDATQSQRRRKTVRLLLAN) the chain is on the cytoplasmic side. Residues 244–264 (LIIFLLCFVPYNSTLAVYGLL) traverse the membrane as a helical segment. Residues 265-280 (RANLVKNSIQDRDQVR) are Extracellular-facing. Residues 281-301 (GVLMIMVLLAGANCVLDPLVY) form a helical membrane-spanning segment. Residues 302 to 372 (YFSAEGFRNT…PDNCSQDSAL (71 aa)) lie on the Cytoplasmic side of the membrane.

This sequence belongs to the G-protein coupled receptor 1 family.

It is found in the cell membrane. Receptor for lysophosphatidic acid (LPA), a mediator of diverse cellular activities. The polypeptide is Lysophosphatidic acid receptor 5 (Lpar5) (Mus musculus (Mouse)).